The chain runs to 444 residues: Phosphoglucosamine mutase (444 aa).

Catalysis depends on Ser-100, which acts as the Phosphoserine intermediate. Ser-100, Asp-240, Asp-242, and Asp-244 together coordinate Mg(2+). At Ser-100 the chain carries Phosphoserine.

It belongs to the phosphohexose mutase family. Mg(2+) is required as a cofactor. In terms of processing, activated by phosphorylation.

The enzyme catalyses alpha-D-glucosamine 1-phosphate = D-glucosamine 6-phosphate. Its function is as follows. Catalyzes the conversion of glucosamine-6-phosphate to glucosamine-1-phosphate. The polypeptide is Phosphoglucosamine mutase (Desulforamulus reducens (strain ATCC BAA-1160 / DSM 100696 / MI-1) (Desulfotomaculum reducens)).